Here is a 561-residue protein sequence, read N- to C-terminus: Membrane protein insertase YidC (561 aa).

6 helical membrane-spanning segments follow: residues 7-27 (ILIVALAIVSYVMVLKWNQDY), 342-362 (LELTVDYGFLWFIAQPIFWLL), 368-388 (LLGNWGWSIIVLTMLIKGLFF), 438-458 (LGGCLPILVQMPVFLALYWVL), 469-489 (WMLWITDLSIKDPFFILPIIM), and 516-536 (PIIFTFFFLWFPAGLVLYWVV).

It belongs to the OXA1/ALB3/YidC family. Type 1 subfamily. As to quaternary structure, interacts with the Sec translocase complex via SecD. Specifically interacts with transmembrane segments of nascent integral membrane proteins during membrane integration.

The protein resides in the cell inner membrane. Required for the insertion and/or proper folding and/or complex formation of integral membrane proteins into the membrane. Involved in integration of membrane proteins that insert both dependently and independently of the Sec translocase complex, as well as at least some lipoproteins. Aids folding of multispanning membrane proteins. The protein is Membrane protein insertase YidC of Pseudomonas entomophila (strain L48).